The following is a 434-amino-acid chain: ATP-dependent protease ATPase subunit HslU (434 aa).

ATP is bound by residues Ile-18, 60–65 (GVGKTE), Asp-247, Glu-312, and Arg-384.

Belongs to the ClpX chaperone family. HslU subfamily. A double ring-shaped homohexamer of HslV is capped on each side by a ring-shaped HslU homohexamer. The assembly of the HslU/HslV complex is dependent on binding of ATP.

The protein localises to the cytoplasm. In terms of biological role, ATPase subunit of a proteasome-like degradation complex; this subunit has chaperone activity. The binding of ATP and its subsequent hydrolysis by HslU are essential for unfolding of protein substrates subsequently hydrolyzed by HslV. HslU recognizes the N-terminal part of its protein substrates and unfolds these before they are guided to HslV for hydrolysis. This Sinorhizobium fredii (strain NBRC 101917 / NGR234) protein is ATP-dependent protease ATPase subunit HslU.